Here is a 323-residue protein sequence, read N- to C-terminus: AA9 family lytic polysaccharide monooxygenase A (323 aa).

The signal sequence occupies residues 1–19 (MKSFISLLGLSFLTCHASA). Residues H20 and H90 each coordinate Cu(2+). A disulfide bridge connects residues C59 and C175. Positions 161 and 170 each coordinate O2. Cu(2+) is bound at residue Y172. Residue N215 is glycosylated (N-linked (GlcNAc...) asparagine). The CBM1 domain maps to 287–323 (AVVQKFGQCGGQGWTGGTTCVAGSTCTATNAYYSQCL).

It belongs to the polysaccharide monooxygenase AA9 family. It depends on Cu(2+) as a cofactor.

Its subcellular location is the secreted. It catalyses the reaction [(1-&gt;4)-beta-D-glucosyl]n+m + reduced acceptor + O2 = 4-dehydro-beta-D-glucosyl-[(1-&gt;4)-beta-D-glucosyl]n-1 + [(1-&gt;4)-beta-D-glucosyl]m + acceptor + H2O.. Its function is as follows. Lytic polysaccharide monooxygenase (LPMO) that depolymerizes crystalline and amorphous polysaccharides via the oxidation of scissile alpha- or beta-(1-4)-glycosidic bonds, yielding C1 and C4 oxidation products. Catalysis by LPMOs requires the reduction of the active-site copper from Cu(II) to Cu(I) by a reducing agent and H(2)O(2) or O(2) as a cosubstrate. The polypeptide is AA9 family lytic polysaccharide monooxygenase A (Botryotinia fuckeliana (strain B05.10) (Noble rot fungus)).